Here is a 338-residue protein sequence, read N- to C-terminus: Phenylalanine--tRNA ligase alpha subunit (338 aa).

Glu253 contacts Mg(2+).

It belongs to the class-II aminoacyl-tRNA synthetase family. Phe-tRNA synthetase alpha subunit type 1 subfamily. In terms of assembly, tetramer of two alpha and two beta subunits. Requires Mg(2+) as cofactor.

The protein localises to the cytoplasm. It catalyses the reaction tRNA(Phe) + L-phenylalanine + ATP = L-phenylalanyl-tRNA(Phe) + AMP + diphosphate + H(+). This is Phenylalanine--tRNA ligase alpha subunit from Geobacter sp. (strain M21).